The sequence spans 322 residues: Lymphatic vessel endothelial hyaluronic acid receptor 1 (322 aa).

An N-terminal signal peptide occupies residues 1–19 (MARCFSLVLLLTSIWTTRL). Topologically, residues 20–238 (LVQGSLRAEE…EAAGFGGVPT (219 aa)) are extracellular. In terms of domain architecture, Link spans 40-130 (GITLVSKKAN…SRQFAAYCYN (91 aa)). A glycan (N-linked (GlcNAc...) asparagine) is linked at Asn53. 2 disulfide bridges follow: Cys61-Cys128 and Cys85-Cys106. Asn130 carries an N-linked (GlcNAc...) asparagine glycan. The chain crosses the membrane as a helical span at residues 239 to 259 (ALLVLALLFFGAAAGLGFCYV). Topologically, residues 260–322 (KRYVKAFPFT…TTVRCLEAEV (63 aa)) are cytoplasmic. A compositionally biased stretch (basic and acidic residues) spans 279–309 (ETKVVKEEKANDSNPNEESKKTDKNPEESKS). Residues 279–322 (ETKVVKEEKANDSNPNEESKKTDKNPEESKSPSKTTVRCLEAEV) form a disordered region.

As to quaternary structure, homodimer; disulfide-linked. Interacts with PDGFB and IGFBP3. Forms a transient ternary complex with PDGFB and PDGFRB in TGN. In terms of processing, O-glycosylated. As to expression, mainly expressed in endothelial cells lining lymphatic vessels.

The protein resides in the cell membrane. Its function is as follows. Ligand-specific transporter trafficking between intracellular organelles (TGN) and the plasma membrane. Plays a role in autocrine regulation of cell growth mediated by growth regulators containing cell surface retention sequence binding (CRS). May act as a hyaluronan (HA) transporter, either mediating its uptake for catabolism within lymphatic endothelial cells themselves, or its transport into the lumen of afferent lymphatic vessels for subsequent re-uptake and degradation in lymph nodes. Binds to pericelluar hyaluronan matrices deposited on the surface of leukocytes and facilitates cell adhesion and migration through lymphatic endothelium. In Homo sapiens (Human), this protein is Lymphatic vessel endothelial hyaluronic acid receptor 1 (LYVE1).